Here is a 443-residue protein sequence, read N- to C-terminus: Protein PRRC1 (443 aa).

Disordered regions lie at residues 1-108 (MMEE…LSHF) and 139-206 (ITRG…QDDA). A compositionally biased stretch (polar residues) spans 34–46 (VTSSFSSPNTSGM). Positions 59-80 (PSLPPVQPSAPPPFVPLSPAPS) are enriched in pro residues. Low complexity predominate over residues 81 to 96 (TPLSGTSVPPSVSPSP). The segment covering 169–188 (ITQQASMTSLAQGPGTTSAI) has biased composition (polar residues).

The protein belongs to the PRRC1 family. As to quaternary structure, interacts with PRKAR1A; resulting in PKA activation.

It localises to the golgi apparatus. Its subcellular location is the cytoplasm. Functionally, may act as a regulator of the protein kinase A (PKA) during embryonic development. The protein is Protein PRRC1 (Prrc1) of Rattus norvegicus (Rat).